The sequence spans 521 residues: GMP synthase [glutamine-hydrolyzing] (521 aa).

Residues 8 to 203 (KILILDFGAQ…VVDICGCQTL (196 aa)) form the Glutamine amidotransferase type-1 domain. The Nucleophile role is filled by cysteine 85. Residues histidine 177 and glutamate 179 contribute to the active site. Residues 204-396 (WTAANIIDDQ…LGLPRTMVYR (193 aa)) enclose the GMPS ATP-PPase domain. 231-237 (SGGVDSS) provides a ligand contact to ATP.

As to quaternary structure, homodimer.

It catalyses the reaction XMP + L-glutamine + ATP + H2O = GMP + L-glutamate + AMP + diphosphate + 2 H(+). The protein operates within purine metabolism; GMP biosynthesis; GMP from XMP (L-Gln route): step 1/1. In terms of biological role, catalyzes the synthesis of GMP from XMP. The polypeptide is GMP synthase [glutamine-hydrolyzing] (Xanthomonas oryzae pv. oryzae (strain PXO99A)).